Consider the following 70-residue polypeptide: U2-agatoxin-Ao1a (70 aa).

A signal peptide spans 1-20 (MRAIISLFLISAMVFSMIQA). Residues 21–34 (VPEEEGLQLSEDER) constitute a propeptide that is removed on maturation. 3 disulfide bridges follow: Cys-37–Cys-53, Cys-44–Cys-58, and Cys-52–Cys-68. Leucine amide is present on Leu-69.

It belongs to the neurotoxin 01 (U2-agtx) family. As to expression, expressed by the venom gland.

The protein resides in the secreted. In terms of biological role, insect active toxin causing rapid but reversible paralysis in crickets. No activity shown in mammals. Suppresses the excitatory postsynaptic potentials evoked in lobster neuromuscular synaptic preparations, possibly by blocking the presynaptic calcium channel. Induces instantaneous reversible paralysis when injected into crickets. Does not show effect on mammalian Cav2.1/CACNA1A, Cav2.2/CACNA1B and Cav2.3/CACNA1E. The protein is U2-agatoxin-Ao1a of Agelena orientalis (Funnel-web spider).